The chain runs to 194 residues: Large ribosomal subunit protein uL6m (194 aa).

The protein belongs to the universal ribosomal protein uL6 family.

It localises to the mitochondrion. This Prototheca wickerhamii protein is Large ribosomal subunit protein uL6m (RPL6).